The chain runs to 178 residues: MQNKQNLIWIDLEMTGLDPDTDVIIEMATIITDSELNTLAEGPVIAVHQSDETLAKMDEWNTRQHGGSGLTQRVRESTVSMAEAEAQTLEFIKLWVPERSSPICGNSICQDRRFLYRHMPTLENWFHYRNLDVSTLKELAARWSPELKFKKGSTHLALDDIRESIAELRFYREHFIKP.

Positions 7-168 (LIWIDLEMTG…DDIRESIAEL (162 aa)) constitute an Exonuclease domain. Residue tyrosine 128 is part of the active site.

It belongs to the oligoribonuclease family.

The protein localises to the cytoplasm. In terms of biological role, 3'-to-5' exoribonuclease specific for small oligoribonucleotides. The polypeptide is Oligoribonuclease (Pseudomonas syringae pv. syringae (strain B728a)).